A 217-amino-acid polypeptide reads, in one-letter code: Pyridoxine/pyridoxamine 5'-phosphate oxidase (217 aa).

Residues 13–16 and Lys-71 each bind substrate; that span reads RREY. Residues 66–71, 81–82, Arg-87, Lys-88, and Gln-110 each bind FMN; these read RIVLLK and YT. 3 residues coordinate substrate: Tyr-128, Arg-132, and Ser-136. Residues 145–146 and Trp-190 contribute to the FMN site; that span reads QS. 196-198 lines the substrate pocket; the sequence is RLH. Arg-200 contacts FMN.

It belongs to the pyridoxamine 5'-phosphate oxidase family. In terms of assembly, homodimer. Requires FMN as cofactor.

It carries out the reaction pyridoxamine 5'-phosphate + O2 + H2O = pyridoxal 5'-phosphate + H2O2 + NH4(+). The enzyme catalyses pyridoxine 5'-phosphate + O2 = pyridoxal 5'-phosphate + H2O2. Its pathway is cofactor metabolism; pyridoxal 5'-phosphate salvage; pyridoxal 5'-phosphate from pyridoxamine 5'-phosphate: step 1/1. It participates in cofactor metabolism; pyridoxal 5'-phosphate salvage; pyridoxal 5'-phosphate from pyridoxine 5'-phosphate: step 1/1. Its function is as follows. Catalyzes the oxidation of either pyridoxine 5'-phosphate (PNP) or pyridoxamine 5'-phosphate (PMP) into pyridoxal 5'-phosphate (PLP). The polypeptide is Pyridoxine/pyridoxamine 5'-phosphate oxidase (Yersinia pestis bv. Antiqua (strain Antiqua)).